The sequence spans 1122 residues: RecBCD enzyme subunit RecC (1122 aa).

It belongs to the RecC family. Heterotrimer of RecB, RecC and RecD. All subunits contribute to DNA-binding. Interacts with YgbT (Cas1). As to quaternary structure, (Microbial infection) Lambda virus GamS protein interacts with the enzyme without displacing any of the subunits.

Its activity is regulated as follows. After reacting with DNA bearing a Chi site the holoenzyme is disassembled and loses exonuclease activity, DNA unwinding and Chi-directed DNA cleavage; RecB remains complexed with ssDNA, which may prevent holoenzyme reassembly. High levels of Mg(2+) (13 mM MgCl(2+)) or incubation with DNase allow holoenzyme reassembly, suggesting it is DNA bound to RecB that prevents reassembly. With respect to regulation, (Microbial infection) RecBCD is inhibited by the lambda virus gam protein (both GamL and GamS isoforms); in vitro a short preincubation prior to adding DNA results in maximal inhibition. Functionally, a helicase/nuclease that prepares dsDNA breaks (DSB) for recombinational DNA repair. Binds to DSBs and unwinds DNA via a rapid (&gt;1 kb/second) and highly processive (&gt;30 kb) ATP-dependent bidirectional helicase. Unwinds dsDNA until it encounters a Chi (crossover hotspot instigator, 5'-GCTGGTGG-3') sequence from the 3' direction. Cuts ssDNA a few nucleotides 3' to Chi site, by nicking one strand or switching the strand degraded (depending on the reaction conditions). The properties and activities of the enzyme are changed at Chi. The Chi-altered holoenzyme produces a long 3'-ssDNA overhang which facilitates RecA-binding to the ssDNA for homologous DNA recombination and repair. Holoenzyme degrades any linearized DNA that is unable to undergo homologous recombination. In the holoenzyme this subunit almost certainly recognizes the wild-type Chi sequence, when added to isolated RecB increases its ATP-dependent helicase processivity. The RecBC complex requires the RecD subunit for nuclease activity, but can translocate along ssDNA in both directions. The RecBCD complex does not unwind G-quadruplex DNA. This is RecBCD enzyme subunit RecC from Escherichia coli (strain K12).